The following is a 273-amino-acid chain: 3-methyl-2-oxobutanoate hydroxymethyltransferase (273 aa).

2 residues coordinate Mg(2+): Asp53 and Asp92. 3-methyl-2-oxobutanoate is bound by residues 53–54 (DS), Asp92, and Lys122. Glu124 is a binding site for Mg(2+). The active-site Proton acceptor is the Glu191.

Belongs to the PanB family. As to quaternary structure, homodecamer; pentamer of dimers. Mg(2+) is required as a cofactor.

It localises to the cytoplasm. The catalysed reaction is 3-methyl-2-oxobutanoate + (6R)-5,10-methylene-5,6,7,8-tetrahydrofolate + H2O = 2-dehydropantoate + (6S)-5,6,7,8-tetrahydrofolate. The protein operates within cofactor biosynthesis; (R)-pantothenate biosynthesis; (R)-pantoate from 3-methyl-2-oxobutanoate: step 1/2. Its function is as follows. Catalyzes the reversible reaction in which hydroxymethyl group from 5,10-methylenetetrahydrofolate is transferred onto alpha-ketoisovalerate to form ketopantoate. In Porphyromonas gingivalis (strain ATCC 33277 / DSM 20709 / CIP 103683 / JCM 12257 / NCTC 11834 / 2561), this protein is 3-methyl-2-oxobutanoate hydroxymethyltransferase.